Reading from the N-terminus, the 221-residue chain is Ktr system potassium uptake protein C (221 aa).

Residues Lys2–Val118 enclose the RCK N-terminal domain. NAD(+) contacts are provided by residues Arg12, Asp32–Asp34, Asp52–Ser53, Ile74–Glu76, Lys99–Gln101, His105, and Glu121. The RCK C-terminal domain occupies Asn135 to His219.

It belongs to the KtrA potassium transport family. Homodimer, tetramer (dimer of homodimer) and octamer (tetramer of homodimer). Part of the KtrCD complex formed by an octameric catalytic ring of KtrC and a membrane associated dimer of KtrD forming a potassium channel.

It localises to the cell membrane. In terms of biological role, catalytic subunit of the KtrCD potassium uptake transporter. The 2 major potassium transporter complexes KtrAB and KtrCD confer resistance to both suddenly imposed and prolonged osmotic stress. The sequence is that of Ktr system potassium uptake protein C (ktrC) from Bacillus subtilis (strain 168).